A 557-amino-acid chain; its full sequence is Dihydroxy-acid dehydratase (557 aa).

Mg(2+) is bound at residue Asp-78. Cys-119 contributes to the [2Fe-2S] cluster binding site. Residues Asp-120 and Lys-121 each contribute to the Mg(2+) site. Lys-121 carries the N6-carboxylysine modification. Cys-191 is a binding site for [2Fe-2S] cluster. Glu-442 is a binding site for Mg(2+). Ser-468 serves as the catalytic Proton acceptor.

Belongs to the IlvD/Edd family. As to quaternary structure, homodimer. [2Fe-2S] cluster serves as cofactor. Mg(2+) is required as a cofactor.

The enzyme catalyses (2R)-2,3-dihydroxy-3-methylbutanoate = 3-methyl-2-oxobutanoate + H2O. It carries out the reaction (2R,3R)-2,3-dihydroxy-3-methylpentanoate = (S)-3-methyl-2-oxopentanoate + H2O. It functions in the pathway amino-acid biosynthesis; L-isoleucine biosynthesis; L-isoleucine from 2-oxobutanoate: step 3/4. It participates in amino-acid biosynthesis; L-valine biosynthesis; L-valine from pyruvate: step 3/4. Its function is as follows. Functions in the biosynthesis of branched-chain amino acids. Catalyzes the dehydration of (2R,3R)-2,3-dihydroxy-3-methylpentanoate (2,3-dihydroxy-3-methylvalerate) into 2-oxo-3-methylpentanoate (2-oxo-3-methylvalerate) and of (2R)-2,3-dihydroxy-3-methylbutanoate (2,3-dihydroxyisovalerate) into 2-oxo-3-methylbutanoate (2-oxoisovalerate), the penultimate precursor to L-isoleucine and L-valine, respectively. In Lachnospira eligens (strain ATCC 27750 / DSM 3376 / VPI C15-48 / C15-B4) (Eubacterium eligens), this protein is Dihydroxy-acid dehydratase.